The sequence spans 315 residues: ATP synthase gamma chain (315 aa).

It belongs to the ATPase gamma chain family. F-type ATPases have 2 components, CF(1) - the catalytic core - and CF(0) - the membrane proton channel. CF(1) has five subunits: alpha(3), beta(3), gamma(1), delta(1), epsilon(1). CF(0) has three main subunits: a, b and c.

It localises to the cellular thylakoid membrane. Functionally, produces ATP from ADP in the presence of a proton gradient across the membrane. The gamma chain is believed to be important in regulating ATPase activity and the flow of protons through the CF(0) complex. This chain is ATP synthase gamma chain, found in Microcystis aeruginosa (strain NIES-843 / IAM M-2473).